Here is a 471-residue protein sequence, read N- to C-terminus: ATP synthase subunit beta (471 aa).

153–160 is a binding site for ATP; sequence GGAGVGKT.

The protein belongs to the ATPase alpha/beta chains family. In terms of assembly, F-type ATPases have 2 components, CF(1) - the catalytic core - and CF(0) - the membrane proton channel. CF(1) has five subunits: alpha(3), beta(3), gamma(1), delta(1), epsilon(1). CF(0) has four main subunits: a(1), b(1), b'(1) and c(9-12).

Its subcellular location is the cell membrane. It carries out the reaction ATP + H2O + 4 H(+)(in) = ADP + phosphate + 5 H(+)(out). Produces ATP from ADP in the presence of a proton gradient across the membrane. The catalytic sites are hosted primarily by the beta subunits. The polypeptide is ATP synthase subunit beta (Chloroflexus aggregans (strain MD-66 / DSM 9485)).